A 351-amino-acid polypeptide reads, in one-letter code: Type II restriction enzyme NmeDI (351 aa).

The catalysed reaction is Endonucleolytic cleavage of DNA to give specific double-stranded fragments with terminal 5'-phosphates.. Functionally, a P subtype restriction enzyme that recognizes the double-stranded sequence 5'-N(12)RCCGGYN(12)-3' and cleaves on both sides of the recognition sequence. The sequence is that of Type II restriction enzyme NmeDI (nmeDIRP) from Neisseria meningitidis serogroup C.